A 155-amino-acid chain; its full sequence is MMTQDYKLQVEAIKCGTVIDHIPAQIGFKLLSLFKLTATDQRITIGLNLPSKRSGRKDLIKIENTFLTEQQANQLAMYAPDATVNRIDNYEVVKKLTLSLPERIDAVLTCPNSNCISHNEPVDSSFTVKAQRGEISLKCKYCEKEFDHLTVLHAD.

Cys110, Cys115, Cys139, and Cys142 together coordinate Zn(2+).

This sequence belongs to the PyrI family. In terms of assembly, contains catalytic and regulatory chains. The cofactor is Zn(2+).

In terms of biological role, involved in allosteric regulation of aspartate carbamoyltransferase. The chain is Aspartate carbamoyltransferase regulatory chain from Yersinia pestis bv. Antiqua (strain Antiqua).